The following is a 151-amino-acid chain: Neuroglobin (151 aa).

In terms of domain architecture, Globin spans 1 to 149 (MELPEPELIR…VVQAMSRGWG (149 aa)). 2 residues coordinate heme b: histidine 64 and histidine 96.

Belongs to the globin family. As to quaternary structure, monomer. Homodimer and homotetramer; disulfide-linked. Mainly monomeric but also detected as part of homodimers and homotetramers. Interacts with 14-3-3 proteins; regulates the phosphorylation of NGB. Could interact (ferrous form) with G-alpha(i) proteins (GTP-bound form). Post-translationally, phosphorylated during hypoxia by ERK1/ERK2. Phosphorylation regulates the heme pocket hexacoordination preventing the association of His-64 with the heme metal center. Thereby, promotes the access of dioxygen and nitrite to the heme and stimulates the nitrite reductase activity. Phosphorylation during hypoxia is stabilized by 14-3-3 proteins.

It localises to the cytoplasm. Its subcellular location is the cytosol. It is found in the mitochondrion matrix. The enzyme catalyses Fe(III)-heme b-[protein] + nitric oxide + H2O = Fe(II)-heme b-[protein] + nitrite + 2 H(+). In terms of biological role, monomeric globin with a bis-histidyl six-coordinate heme-iron atom through which it can bind dioxygen, carbon monoxide and nitric oxide. Could help transport oxygen and increase its availability to the metabolically active neuronal tissues, though its low quantity in tissues as well as its high affinity for dioxygen, which may limit its oxygen-releasing ability, argue against it. The ferrous/deoxygenated form exhibits a nitrite reductase activity and it could produce nitric oxide which in turn inhibits cellular respiration in response to hypoxia. In its ferrous/deoxygenated state, it may also exhibit GDI (Guanine nucleotide Dissociation Inhibitor) activity toward heterotrimeric G-alpha proteins, thereby regulating signal transduction to facilitate neuroprotective responses in the wake of hypoxia and associated oxidative stress. The polypeptide is Neuroglobin (Bos taurus (Bovine)).